We begin with the raw amino-acid sequence, 310 residues long: MGRMRGEALAQEVLRLKRERNAVILAHSYQLPEVQEVADFVGDSLGLAREAQRTRAEVIVFCGVHFMAETAAILNPEKTVLLPDLEAGCSLADSIRPEDVLAWKAKHPDGIVVAYVNTKAEVKALADVCVTSANAVEVVSRLPQDRPIYFVPDMFLGAHVARATGRRLDLFPGECHVHAGIREEHLKALLEAHPGAEFLIHPECGCGSGCLYLKPDAKMLSTEGMVRYAKGAEAREFVVATEVGILHRLKKEAPEKAFFPVKPDAVCEYMKRITLEKVYLSLKEMRHVVRVPEEVAGRARRALEAMVAVG.

Iminosuccinate contacts are provided by His27 and Ser44. A [4Fe-4S] cluster-binding site is contributed by Cys89. Iminosuccinate is bound by residues 115–117 and Ser132; that span reads YVN. [4Fe-4S] cluster is bound at residue Cys175. Residues 201–203 and Thr222 each bind iminosuccinate; that span reads HPE. [4Fe-4S] cluster is bound at residue Cys267.

It belongs to the quinolinate synthase family. Type 2 subfamily. It depends on [4Fe-4S] cluster as a cofactor.

The protein localises to the cytoplasm. The enzyme catalyses iminosuccinate + dihydroxyacetone phosphate = quinolinate + phosphate + 2 H2O + H(+). The protein operates within cofactor biosynthesis; NAD(+) biosynthesis; quinolinate from iminoaspartate: step 1/1. Functionally, catalyzes the condensation of iminoaspartate with dihydroxyacetone phosphate to form quinolinate. The chain is Quinolinate synthase from Thermus thermophilus (strain ATCC BAA-163 / DSM 7039 / HB27).